The following is a 286-amino-acid chain: Deleted in azoospermia-like-B (286 aa).

The 82-residue stretch at 33–114 folds into the RRM domain; the sequence is NTVFVGGIDI…PAIRKICTYV (82 aa). Positions 155–180 constitute a DAZ domain; it reads ACPYPSSPPMAIQQIPVGCQQPGYFQ.

The protein belongs to the RRM DAZ family. In terms of assembly, interacts with the C-terminus of pabp1 and with epabp. Prior to oocyte maturation, found in a complex with epabp and pum2 proteins and spdy1 mRNA; pum2 dissociates from the complex during maturation.

Its subcellular location is the cytoplasm. Its function is as follows. RNA-binding protein that is required for primordial germ cell (PGC) differentiation and indirectly necessary for the migration of PGCs through the endoderm. May promote meiotic cell division during spermatogenesis. Shows a preference for G- and U-rich RNAs and probably binds the 3'-UTR of target mRNAs. Stimulates the initiation of translation of mRNAs through the recruitment of poly(A)-binding proteins (PABPs). This is Deleted in azoospermia-like-B (dazl-b) from Xenopus laevis (African clawed frog).